Reading from the N-terminus, the 352-residue chain is Sortase SrtE1 (352 aa).

Composition is skewed to basic and acidic residues over residues 1 to 10 (MTALRPERDS) and 34 to 45 (RYEESAAGEENR). The tract at residues 1 to 132 (MTALRPERDS…RQARARKPGA (132 aa)) is disordered. The Cytoplasmic portion of the chain corresponds to 1 to 139 (MTALRPERDS…PGAAVVASRA (139 aa)). Positions 15 to 79 (DQGSSYGQPY…TGPIGGGPDG (65 aa)) are required for protein stability. Gly residues predominate over residues 71–82 (GPIGGGPDGGGR). Residues 83–97 (AARRKAAKRRHGRRG) show a composition bias toward basic residues. The helical transmembrane segment at 140 to 160 (IGEIFITTGVLMLLFVTYQLW) threads the bilayer. Topologically, residues 161 to 352 (WTNVRAHAQA…SKGKPDALVS (192 aa)) are extracellular. Residues His251 and Cys320 contribute to the active site. The active-site Proton donor is the Arg329.

This sequence belongs to the bacterial sortase family. Class E subfamily.

The protein localises to the cell membrane. The catalysed reaction is The enzyme catalyzes a cell wall sorting reaction in which a surface protein with a sorting signal containing a LPXTG motif is cleaved between the Thr and Gly residue. The resulting threonine carboxyl end of the protein is covalently attached to a pentaglycine cross-bridge of peptidoglycan.. Functionally, transpeptidase that anchors surface proteins to the cell wall. Recognizes both Leu-Ala-x-Thr-Gly and Leu-Pro-x-Thr-Gly, with a preference for the former. Unlike the S.aureus sortase it cleaves not only the Thr-Gly motif but also the Ala-X bond; Ala-Glu and Ala-His bonds are better substrates than the Thr-Gly motif in vitro. Among its possible substrates are the chaplins ChpA, ChpB and ChpC; this enzyme is less important for ChpC attachment than is SrtE2. A double knockout mutant of srtE1 and srtE2 shows a developmental defect in aerial hyphae formation more dramatic than that due to chaplin deletion. The polypeptide is Sortase SrtE1 (Streptomyces coelicolor (strain ATCC BAA-471 / A3(2) / M145)).